A 123-amino-acid polypeptide reads, in one-letter code: Large ribosomal subunit protein bL20 (123 aa).

The protein belongs to the bacterial ribosomal protein bL20 family.

In terms of biological role, binds directly to 23S ribosomal RNA and is necessary for the in vitro assembly process of the 50S ribosomal subunit. It is not involved in the protein synthesizing functions of that subunit. The sequence is that of Large ribosomal subunit protein bL20 from Pseudothermotoga lettingae (strain ATCC BAA-301 / DSM 14385 / NBRC 107922 / TMO) (Thermotoga lettingae).